We begin with the raw amino-acid sequence, 113 residues long: UPF0145 protein MTH_544 (113 aa).

This sequence belongs to the UPF0145 family.

The chain is UPF0145 protein MTH_544 from Methanothermobacter thermautotrophicus (strain ATCC 29096 / DSM 1053 / JCM 10044 / NBRC 100330 / Delta H) (Methanobacterium thermoautotrophicum).